A 307-amino-acid polypeptide reads, in one-letter code: Protein ORANGE, chloroplastic (307 aa).

Residues 1 to 55 (MSSLGRILSVSYPPDPYTWRFSQYKLSSSLGRNRRLRWRFTALDPESSSLDSESS) constitute a chloroplast transit peptide. A Glycyl lysine isopeptide (Lys-Gly) (interchain with G-Cter in ubiquitin) cross-link involves residue lysine 58. Transmembrane regions (helical) follow at residues 146 to 166 (VYYA…GLLA) and 199 to 219 (IVAS…VVEV). The segment at 208 to 299 (VGVISALMVV…CTGMAMASEH (92 aa)) is CR-type-like. The stretch at 230–237 (CKYCLGTG) is one CXXCXGXG motif repeat. A CXXCXXXG motif repeat occupies 241 to 248 (CARCSSTG). The stretch at 274–281 (CSNCSGAG) is one CXXCXGXG motif repeat. The stretch at 285–292 (CPTCLCTG) is one CXXCXXXG motif repeat.

Belongs to the orange-like family. Interacts with the phytoene synthase PSY1 in chloroplast. Binds to the eukaryotic release factor eRF1-2. Interacts with the transcription factor TCP14 in the nucleus to repress chloroplast biogenesis in etiolated seedlings. Associates to the E2 ubiquitin-conjugating enzyme UBC19. In terms of processing, ubiquitination at K-58 by UBC19 is essential for nuclear localization.

Its subcellular location is the plastid. The protein localises to the chloroplast membrane. The protein resides in the nucleus. It is found in the cytoplasm. Functionally, involved in chromoplast differentiation. Associated with a cellular process that triggers the differentiation of pro-plastids or other non-colored plastids into chromoplasts for carotenoid accumulation. Is associated with carotenoid accumulation in chromoplasts. Functions as a major regulator of the phytoene synthase PSY1 protein level and activity. Modulates carotenoid biosynthesis by means of post-transcriptional regulation of PSY1. Modulates carotenoid biosynthesis in part by up-regulating a series of endogenous carotenogenic genes. Regulates cell elongation in the petiole in an eRF1-2-dependent manner. Binds to and represses TCP14 transactivation activity, thus preventing early light-induced proteins (ELIPs, e.g. ELIP1 and ELIP2) expression and delaying chloroplast biogenesis (e.g. lower chlorophyll biosynthesis and slower development of thylakoid membranes) in germinating cotyledons and etiolated seedlings; reduced levels upon illumination combined to TCP14 accumulation derepress chloroplast biogenesis during deetiolation. This Arabidopsis thaliana (Mouse-ear cress) protein is Protein ORANGE, chloroplastic.